We begin with the raw amino-acid sequence, 399 residues long: Small ribosomal subunit protein uS3m (399 aa).

This sequence belongs to the universal ribosomal protein uS3 family.

Its subcellular location is the mitochondrion. Functionally, essential for mitochondrial protein synthesis and required for the maturation of small ribosomal subunits. The sequence is that of Small ribosomal subunit protein uS3m from Penicillium urticae.